The following is a 485-amino-acid chain: UDP-N-acetylmuramate--L-alanine ligase (485 aa).

Position 129 to 135 (129 to 135 (GTHGKTT)) interacts with ATP.

It belongs to the MurCDEF family.

The protein localises to the cytoplasm. It carries out the reaction UDP-N-acetyl-alpha-D-muramate + L-alanine + ATP = UDP-N-acetyl-alpha-D-muramoyl-L-alanine + ADP + phosphate + H(+). It functions in the pathway cell wall biogenesis; peptidoglycan biosynthesis. Its function is as follows. Cell wall formation. In Vibrio parahaemolyticus serotype O3:K6 (strain RIMD 2210633), this protein is UDP-N-acetylmuramate--L-alanine ligase.